Consider the following 137-residue polypeptide: uncharacterized protein (137 aa).

The protein belongs to the ycf72 family.

The protein localises to the plastid. It is found in the chloroplast. This is an uncharacterized protein from Zea mays (Maize).